The primary structure comprises 101 residues: Chaperone modulatory protein CbpM (101 aa).

Belongs to the CbpM family.

Functionally, interacts with CbpA and inhibits both the DnaJ-like co-chaperone activity and the DNA binding activity of CbpA. Together with CbpA, modulates the activity of the DnaK chaperone system. Does not inhibit the co-chaperone activity of DnaJ. The chain is Chaperone modulatory protein CbpM from Pseudomonas putida (strain ATCC 700007 / DSM 6899 / JCM 31910 / BCRC 17059 / LMG 24140 / F1).